The primary structure comprises 460 residues: Mogroside I-E synthase (460 aa).

His25 (proton acceptor) is an active-site residue. Catalysis depends on Asp114, which acts as the Charge relay. Residues Ser286, Cys339, Gln341, Trp359, Asn360, Ser361, Glu364, Asp380, and Gln381 each contribute to the UDP-alpha-D-glucose site.

The protein belongs to the UDP-glycosyltransferase family. In terms of tissue distribution, highly expressed in young fruits 15 days after anthesis (15-DAA).

The catalysed reaction is mogrol + UDP-alpha-D-glucose = mogroside IE + UDP + H(+). It catalyses the reaction mogroside I-A1 + UDP-alpha-D-glucose = mogroside IIE + UDP + H(+). The enzyme catalyses mogroside II-A1 + UDP-alpha-D-glucose = mogroside IIIX + UDP + H(+). It carries out the reaction mogroside II-A + UDP-alpha-D-glucose = mogroside III + UDP + H(+). The catalysed reaction is mogroside III-A1 + UDP-alpha-D-glucose = siamenoside I + UDP + H(+). It functions in the pathway secondary metabolite biosynthesis; terpenoid biosynthesis. Functionally, UDP-glycosyltransferase involved in the biosynthesis of cucurbitacin and mogroside tetracyclic triterpene natural products (e.g. siamenoside I and mogrosides IV, V and VI). Cucurbitacins have cytotoxic properties and exhibit deterrent taste as a defense barrier against herbivores. Mogrosides are nonsugar highly oxygenated compounds used as high-intensity zero-calorie sweeteners; they also possess pharmacological properties such as regulating immunity, lowering blood sugar and lipid levels, protecting the liver, and acting as antioxidants and antitumor agents. Catalyzes the C3 primary glucosylation of mogrol, mogroside I-A1, mogroside II-A1, mogroside II-A and mogroside III-A1. The chain is Mogroside I-E synthase from Siraitia grosvenorii (Monk's fruit).